A 354-amino-acid chain; its full sequence is Hyaluronan and proteoglycan link protein 1 (354 aa).

Positions 1–15 (MKSLLLLVLISICGA) are excised as a propeptide. Residues asparagine 21 and asparagine 56 are each glycosylated (N-linked (GlcNAc...) asparagine). An Ig-like V-type domain is found at 38-152 (PRLLVEAEQA…EGLEDDTAVV (115 aa)). 5 cysteine pairs are disulfide-bonded: cysteine 61/cysteine 139, cysteine 181/cysteine 252, cysteine 205/cysteine 226, cysteine 279/cysteine 349, and cysteine 304/cysteine 325. 2 Link domains span residues 159–254 (VVFP…FCFT) and 259–351 (GRFY…YCFR).

Belongs to the HAPLN family.

It localises to the secreted. The protein localises to the extracellular space. It is found in the extracellular matrix. In terms of biological role, stabilizes the aggregates of proteoglycan monomers with hyaluronic acid in the extracellular cartilage matrix. The polypeptide is Hyaluronan and proteoglycan link protein 1 (HAPLN1) (Equus caballus (Horse)).